A 549-amino-acid polypeptide reads, in one-letter code: O-fucosyltransferase 29 (549 aa).

The helical; Signal-anchor for type II membrane protein transmembrane segment at 43–63 (TVMWTWVCGFMLFSLGVISLF) threads the bilayer. An N-linked (GlcNAc...) asparagine glycan is attached at asparagine 152. 292-294 (HLR) contributes to the substrate binding site. Asparagine 359 and asparagine 527 each carry an N-linked (GlcNAc...) asparagine glycan. The segment at 506–549 (PFSYDKTSTDDEEEDMSEENHNSTSPGHVHLSSADNERDEVFPD) is disordered. Basic and acidic residues predominate over residues 540-549 (DNERDEVFPD).

It belongs to the glycosyltransferase GT106 family.

It localises to the membrane. Its pathway is glycan metabolism. The sequence is that of O-fucosyltransferase 29 from Arabidopsis thaliana (Mouse-ear cress).